The primary structure comprises 229 residues: DNA repair protein RecO (229 aa).

It belongs to the RecO family.

Functionally, involved in DNA repair and RecF pathway recombination. The sequence is that of DNA repair protein RecO from Pseudomonas fluorescens (strain ATCC BAA-477 / NRRL B-23932 / Pf-5).